Consider the following 306-residue polypeptide: D-alanine--D-alanine ligase (306 aa).

The region spanning 101–303 is the ATP-grasp domain; the sequence is KLLWQGAGLP…FSQLVVRILE (203 aa). 134–189 is an ATP binding site; it reads ISALGLPLIVKPSREGSSVGMTKVVEENALQGALSLAFQHDDEILIEKWLCGPEFT. Mg(2+) is bound by residues aspartate 257, glutamate 270, and asparagine 272.

It belongs to the D-alanine--D-alanine ligase family. The cofactor is Mg(2+). Mn(2+) is required as a cofactor.

Its subcellular location is the cytoplasm. The enzyme catalyses 2 D-alanine + ATP = D-alanyl-D-alanine + ADP + phosphate + H(+). It participates in cell wall biogenesis; peptidoglycan biosynthesis. Cell wall formation. This is D-alanine--D-alanine ligase from Salmonella paratyphi A (strain ATCC 9150 / SARB42).